The sequence spans 336 residues: uncharacterized protein (336 aa).

A compositionally biased stretch (basic and acidic residues) spans Lys-297 to Met-316. Positions Lys-297–His-336 are disordered.

This is an uncharacterized protein from Invertebrate iridescent virus 6 (IIV-6).